The sequence spans 315 residues: Methionyl-tRNA formyltransferase (315 aa).

113 to 116 (SLLP) provides a ligand contact to (6S)-5,6,7,8-tetrahydrofolate.

The protein belongs to the Fmt family.

The catalysed reaction is L-methionyl-tRNA(fMet) + (6R)-10-formyltetrahydrofolate = N-formyl-L-methionyl-tRNA(fMet) + (6S)-5,6,7,8-tetrahydrofolate + H(+). Attaches a formyl group to the free amino group of methionyl-tRNA(fMet). The formyl group appears to play a dual role in the initiator identity of N-formylmethionyl-tRNA by promoting its recognition by IF2 and preventing the misappropriation of this tRNA by the elongation apparatus. This chain is Methionyl-tRNA formyltransferase, found in Pectobacterium carotovorum subsp. carotovorum (strain PC1).